Here is an 815-residue protein sequence, read N- to C-terminus: Leucine--tRNA ligase (815 aa).

Residues 41–51 (PYPSGTLHVGH) carry the 'HIGH' region motif. The 'KMSKS' region signature appears at 576–580 (KMSKS). Position 579 (K579) interacts with ATP.

Belongs to the class-I aminoacyl-tRNA synthetase family.

It localises to the cytoplasm. It carries out the reaction tRNA(Leu) + L-leucine + ATP = L-leucyl-tRNA(Leu) + AMP + diphosphate. The protein is Leucine--tRNA ligase of Pseudothermotoga lettingae (strain ATCC BAA-301 / DSM 14385 / NBRC 107922 / TMO) (Thermotoga lettingae).